Here is a 907-residue protein sequence, read N- to C-terminus: Eukaryotic translation initiation factor 4 gamma 2 (907 aa).

Methionine 1 carries the post-translational modification N-acetylmethionine. A disordered region spans residues 1–71 (MESAIAEGGA…SAANNSANEK (71 aa)). Position 11 is a phosphoserine (serine 11). The region spanning 78-308 (FRKVRGILNK…QDTVELREHH (231 aa)) is the MIF4G domain. Position 89 is a phosphothreonine (threonine 89). Arginine 360 is modified (omega-N-methylarginine). Serine 395 bears the Phosphoserine mark. The residue at position 431 (lysine 431) is an N6-methyllysine. Position 443 is a phosphoserine (serine 443). The segment at 498-541 (PPSAQPPRTQTPPLGQTPQLGLKTNPPLIQEKPAKTSKKPPPSK) is disordered. Residues 503 to 516 (PPRTQTPPLGQTPQ) are compositionally biased toward polar residues. Omega-N-methylarginine is present on arginine 505. Phosphothreonine is present on residues threonine 508 and threonine 514. Positions 543-666 (ELLKLTETVV…SISELAQPLE (124 aa)) constitute an MI domain. Residue lysine 575 forms a Glycyl lysine isopeptide (Lys-Gly) (interchain with G-Cter in SUMO2) linkage. The W2 domain maps to 720-904 (EGKGLSFLFP…ETAEEEESEE (185 aa)). Serine 902 bears the Phosphoserine mark.

This sequence belongs to the eukaryotic initiation factor 4G family. As to quaternary structure, interacts with the serine/threonine protein kinases MKNK1 and MKNK2. Binds EIF4A and EIF3. Interacts with MIF4GD. Interacts with DAZAP2. In terms of processing, phosphorylation; hyperphosphorylated during mitosis.

Its function is as follows. Appears to play a role in the switch from cap-dependent to IRES-mediated translation during mitosis, apoptosis and viral infection. Cleaved by some caspases and viral proteases. The chain is Eukaryotic translation initiation factor 4 gamma 2 (EIF4G2) from Bos taurus (Bovine).